Reading from the N-terminus, the 502-residue chain is Maturase K (502 aa).

Belongs to the intron maturase 2 family. MatK subfamily.

Its subcellular location is the plastid. The protein localises to the chloroplast. Usually encoded in the trnK tRNA gene intron. Probably assists in splicing its own and other chloroplast group II introns. This Brassica oleracea (Wild cabbage) protein is Maturase K.